The primary structure comprises 130 residues: Small ribosomal subunit protein uS8 (130 aa).

It belongs to the universal ribosomal protein uS8 family. Part of the 30S ribosomal subunit. Contacts proteins S5 and S12.

In terms of biological role, one of the primary rRNA binding proteins, it binds directly to 16S rRNA central domain where it helps coordinate assembly of the platform of the 30S subunit. The chain is Small ribosomal subunit protein uS8 from Ectopseudomonas mendocina (strain ymp) (Pseudomonas mendocina).